We begin with the raw amino-acid sequence, 350 residues long: UDP-N-acetylglucosamine--N-acetylmuramyl-(pentapeptide) pyrophosphoryl-undecaprenol N-acetylglucosamine transferase (350 aa).

UDP-N-acetyl-alpha-D-glucosamine-binding positions include 9–11, Asn123, Arg159, Ser181, and Gln281; that span reads TGG.

Belongs to the glycosyltransferase 28 family. MurG subfamily.

The protein resides in the cell inner membrane. It catalyses the reaction di-trans,octa-cis-undecaprenyl diphospho-N-acetyl-alpha-D-muramoyl-L-alanyl-D-glutamyl-meso-2,6-diaminopimeloyl-D-alanyl-D-alanine + UDP-N-acetyl-alpha-D-glucosamine = di-trans,octa-cis-undecaprenyl diphospho-[N-acetyl-alpha-D-glucosaminyl-(1-&gt;4)]-N-acetyl-alpha-D-muramoyl-L-alanyl-D-glutamyl-meso-2,6-diaminopimeloyl-D-alanyl-D-alanine + UDP + H(+). The protein operates within cell wall biogenesis; peptidoglycan biosynthesis. Its function is as follows. Cell wall formation. Catalyzes the transfer of a GlcNAc subunit on undecaprenyl-pyrophosphoryl-MurNAc-pentapeptide (lipid intermediate I) to form undecaprenyl-pyrophosphoryl-MurNAc-(pentapeptide)GlcNAc (lipid intermediate II). The sequence is that of UDP-N-acetylglucosamine--N-acetylmuramyl-(pentapeptide) pyrophosphoryl-undecaprenol N-acetylglucosamine transferase from Helicobacter hepaticus (strain ATCC 51449 / 3B1).